The primary structure comprises 410 residues: F-box/WD-40 repeat-containing protein 1 (410 aa).

The region spanning 32 to 79 (SKECSLLPFELFEEILCRVPTKSLLRLKLTCKRWLALFNDKRFIYKHL) is the F-box domain. WD repeat units lie at residues 109 to 150 (PNKF…VRWI) and 269 to 309 (DVHN…NGVS).

This chain is F-box/WD-40 repeat-containing protein 1 (FBW1), found in Arabidopsis thaliana (Mouse-ear cress).